A 319-amino-acid chain; its full sequence is Ester hydrolase C11orf54 homolog (319 aa).

3 residues coordinate Zn(2+): His-270, His-272, and His-282.

In terms of assembly, monomer. Requires Zn(2+) as cofactor.

It is found in the nucleus. It localises to the cytoplasm. Functionally, exhibits ester hydrolase activity on the substrate p-nitrophenyl acetate, in vitro. May regulate DNA damage and repair by regulating HIF1A degradation via chaperone-mediated autophagy (CMA). This Danio rerio (Zebrafish) protein is Ester hydrolase C11orf54 homolog.